The chain runs to 1037 residues: MRGSGPRGAGRRRPPSGGGDTPITPASLAGCYSAPRRAPLWTCLLLCAALRTLLASPSNEVNLLDSRTVMGDLGWIAFPKNGWEEIGEVDENYAPIHTYQVCKVMEQNQNNWLLTSWISNEGASRIFIELKFTLRDCNSLPGGLGTCKETFNMYYFESDDQNGRNIKENQYIKIDTIAADESFTELDLGDRVMKLNTEVRDVGPLSKKGFYLAFQDVGACIALVSVRVYYKKCPSVVRHLAVFPDTITGADSSQLLEVSGSCVNHSVTDEPPKMHCSAEGEWLVPIGKCMCKAGYEEKNGTCQVCRPGFFKASPHIQSCGKCPPHSYTHEEASTSCVCEKDYFRRESDPPTMACTRPPSAPRNAISNVNETSVFLEWIPPADTGGRKDVSYYIACKKCNSHAGVCEECGGHVRYLPRQSGLKNTSVMMVDLLAHTNYTFEIEAVNGVSDLSPGARQYVSVNVTTNQAAPSPVTNVKKGKIAKNSISLSWQEPDRPNGIILEYEIKYFEKDQETSYTIIKSKETTITAEGLKPASVYVFQIRARTAAGYGVFSRRFEFETTPVFAASSDQSQIPVIAVSVTVGVILLAVVIGVLLSGSCCECGCGRASSLCAVAHPSLIWRCGYSKAKQDPEEEKMHFHNGHIKLPGVRTYIDPHTYEDPNQAVHEFAKEIEASCITIERVIGAGEFGEVCSGRLKLPGKRELPVAIKTLKVGYTEKQRRDFLGEASIMGQFDHPNIIHLEGVVTKSKPVMIVTEYMENGSLDTFLKKNDGQFTVIQLVGMLRGISAGMKYLSDMGYVHRDLAARNILINSNLVCKVSDFGLSRVLEDDPEAAYTTRGGKIPIRWTAPEAIAFRKFTSASDVWSYGIVMWEVVSYGERPYWEMTNQDVIKAVEEGYRLPSPMDCPAALYQLMLDCWQKERNSRPKFDEIVNMLDKLIRNPSSLKTLVNASCRVSNLLAEHSPLGSGAYRSVGEWLEAIKMGRYTEIFMENGYSSMDAVAQVTLEDLRRLGVTLVGHQKKIMNSLQEMKVQLVNGMVPL.

A signal peptide spans 1-24; the sequence is MRGSGPRGAGRRRPPSGGGDTPIT. The tract at residues 1–24 is disordered; sequence MRGSGPRGAGRRRPPSGGGDTPIT. Residues 25 to 573 are Extracellular-facing; it reads PASLAGCYSA…AASSDQSQIP (549 aa). Residues 60–238 form the Eph LBD domain; it reads EVNLLDSRTV…YYKKCPSVVR (179 aa). Asparagine 264, asparagine 299, asparagine 369, asparagine 423, asparagine 436, and asparagine 461 each carry an N-linked (GlcNAc...) asparagine glycan. Fibronectin type-III domains follow at residues 357 to 467 and 468 to 562; these read PPSA…TNQA and APSP…TTPV. The helical transmembrane segment at 574–594 threads the bilayer; it reads VIAVSVTVGVILLAVVIGVLL. At 595–1037 the chain is on the cytoplasmic side; it reads SGSCCECGCG…VQLVNGMVPL (443 aa). Phosphotyrosine; by autocatalysis occurs at positions 650 and 656. Positions 675–936 constitute a Protein kinase domain; the sequence is ITIERVIGAG…EIVNMLDKLI (262 aa). ATP-binding positions include 681–689 and lysine 707; that span reads IGAGEFGEV. Catalysis depends on aspartate 800, which acts as the Proton acceptor. A phosphotyrosine; by autocatalysis mark is found at tyrosine 833 and tyrosine 982. An SAM domain is found at 965–1029; it reads GAYRSVGEWL…MNSLQEMKVQ (65 aa). The PDZ-binding signature appears at 1035–1037; the sequence is VPL.

This sequence belongs to the protein kinase superfamily. Tyr protein kinase family. Ephrin receptor subfamily. In terms of assembly, heterotetramer upon binding of the ligand. The heterotetramer is composed of an ephrin dimer and a receptor dimer. Oligomerization is probably required to induce biological responses. Interacts (via SAM domain) with SAMD5 (via SAM domain). Post-translationally, phosphorylated. Phosphorylation is stimulated by the ligand EFNA5. Dephosphorylation upon stimulation by glucose, inhibits EPHA5 forward signaling and results in insulin secretion. In terms of tissue distribution, almost exclusively expressed in the nervous system in cortical neurons, cerebellar Purkinje cells and pyramidal neurons within the cortex and hippocampus. Display an increasing gradient of expression from the forebrain to hindbrain and spinal cord.

The protein resides in the cell membrane. Its subcellular location is the cell projection. It localises to the axon. It is found in the dendrite. It carries out the reaction L-tyrosyl-[protein] + ATP = O-phospho-L-tyrosyl-[protein] + ADP + H(+). In terms of biological role, receptor tyrosine kinase which binds promiscuously GPI-anchored ephrin-A family ligands residing on adjacent cells, leading to contact-dependent bidirectional signaling into neighboring cells. The signaling pathway downstream of the receptor is referred to as forward signaling while the signaling pathway downstream of the ephrin ligand is referred to as reverse signaling. Among GPI-anchored ephrin-A ligands, EFNA5 most probably constitutes the cognate/functional ligand for EPHA5. Functions as an axon guidance molecule during development and may be involved in the development of the retinotectal, entorhino-hippocampal and hippocamposeptal pathways. Together with EFNA5 plays also a role in synaptic plasticity in adult brain through regulation of synaptogenesis. In addition to its function in the nervous system, the interaction of EPHA5 with EFNA5 mediates communication between pancreatic islet cells to regulate glucose-stimulated insulin secretion. The polypeptide is Ephrin type-A receptor 5 (EPHA5) (Homo sapiens (Human)).